Consider the following 206-residue polypeptide: Triosephosphate isomerase (206 aa).

Histidine 76 serves as the catalytic Electrophile. The Proton acceptor role is filled by glutamate 146.

This sequence belongs to the triosephosphate isomerase family. In terms of assembly, homodimer.

It carries out the reaction D-glyceraldehyde 3-phosphate = dihydroxyacetone phosphate. Its pathway is carbohydrate biosynthesis; gluconeogenesis. The protein operates within carbohydrate degradation; glycolysis; D-glyceraldehyde 3-phosphate from glycerone phosphate: step 1/1. The protein is Triosephosphate isomerase (Tpi) of Aedes togoi (Mosquito).